Here is a 301-residue protein sequence, read N- to C-terminus: UBX domain-containing protein 2 (301 aa).

The disordered stretch occupies residues 1-61 (MSRNIRTFRD…AARGPDSEAH (61 aa)). Residues 89–153 (TISLTLHLWS…KVNRHHEEYV (65 aa)) form the SEP domain. The disordered stretch occupies residues 176 to 200 (GQSSSSATTAGTSSATTDHNPDHTA). Residues 178–192 (SSSSATTAGTSSATT) are compositionally biased toward low complexity. Positions 218 to 295 (MNEPTTNIQI…NVLNSVVAVK (78 aa)) constitute a UBX domain.

This sequence belongs to the NSFL1C family. As to quaternary structure, interacts with cdc-48.1 (via N-terminus) and cdc-48.2 (via N-terminus). Interacts with kinase air-1. As to expression, expressed in the germline (at protein level). Expressed in spermatocytes but not in mature sperm (at protein level). Ubiquitously expressed. Predominantly expressed in the spermatheca.

Its subcellular location is the cytoplasm. The protein resides in the perinuclear region. It is found in the nucleus. The protein localises to the cytoskeleton. It localises to the microtubule organizing center. Its subcellular location is the centrosome. In terms of biological role, ubiquitin-binding protein which acts as an adapter for ATPase cdc-48.1 and/or cdc-48.2, conferring substrate specificity. Together with ubxn-2 and ubxn-3, plays a role in hermaphrodite spermatogenesis probably by promoting the degradation of sex determination terminal factor tra-1. Probably in association with ATPase cdc-48.1 or/and cdc-48.2, regulates the centrosomal levels of kinase air-1 levels during mitotic progression by promoting air-1 removal from centrosomes in prophase. Also, regulates spindle orientation in the one-cell embryo by controlling centration and rotation of the pronuclei-centrosome complex in prophase. The polypeptide is UBX domain-containing protein 2 (Caenorhabditis elegans).